The primary structure comprises 1033 residues: NACHT, LRR and PYD domains-containing protein 11 (1033 aa).

Residues 1 to 91 (MAESDSTDFD…CRKIIGRRNR (91 aa)) enclose the Pyrin domain. The region spanning 147–470 (LNVFLMGERA…AFLMAVPNYL (324 aa)) is the NACHT domain. 153–160 (GERASGKT) is an ATP binding site. LRR repeat units follow at residues 588 to 611 (CCHLRTLKLSVQRIFQNKEPLIRP), 632 to 655 (MESLRELHIFDNDLNGISERILSK), 745 to 768 (GGSLRKLTLSSNPLRSDGMNILCD), 802 to 827 (SPTLRQLDLCVNRLKNYGVLHVTFPL), 859 to 882 (NEKLRSLEIGSNKIEDAGMQLLCG), and 919 to 944 (LERLNLLQNHLGNDGVAKLLESLISP).

This sequence belongs to the NLRP family.

In terms of biological role, involved in inflammation. The protein is NACHT, LRR and PYD domains-containing protein 11 (NLRP11) of Homo sapiens (Human).